Here is a 143-residue protein sequence, read N- to C-terminus: Fluoride-specific ion channel FluC (143 aa).

A run of 4 helical transmembrane segments spans residues 6-26 (CILV…VSVL), 38-58 (TILI…LTLA), 70-90 (LFVM…SLQT), and 103-123 (MVNV…GHVV). The Na(+) site is built by G78 and T81.

This sequence belongs to the fluoride channel Fluc/FEX (TC 1.A.43) family.

Its subcellular location is the cell inner membrane. It carries out the reaction fluoride(in) = fluoride(out). Its activity is regulated as follows. Na(+) is not transported, but it plays an essential structural role and its presence is essential for fluoride channel function. Functionally, fluoride-specific ion channel. Important for reducing fluoride concentration in the cell, thus reducing its toxicity. The protein is Fluoride-specific ion channel FluC of Methylobacterium radiotolerans (strain ATCC 27329 / DSM 1819 / JCM 2831 / NBRC 15690 / NCIMB 10815 / 0-1).